The primary structure comprises 1381 residues: Contactin-associated protein 1 (1381 aa).

The signal sequence occupies residues methionine 1 to glycine 20. The Extracellular portion of the chain corresponds to tryptophan 21 to alanine 1284. An F5/8 type C domain is found at cysteine 26–cysteine 169. The cysteines at positions 26 and 169 are disulfide-linked. N-linked (GlcNAc...) asparagine glycans are attached at residues asparagine 121, asparagine 129, and asparagine 277. 2 Laminin G-like domains span residues phenylalanine 204–cysteine 356 and phenylalanine 390–cysteine 539. Cysteine 324 and cysteine 356 form a disulfide bridge. N-linked (GlcNAc...) asparagine glycans are attached at residues asparagine 421, asparagine 500, and asparagine 519. Cystine bridges form between cysteine 507-cysteine 539, cysteine 545-cysteine 556, cysteine 550-cysteine 565, and cysteine 567-cysteine 577. An EGF-like 1 domain is found at arginine 544 to threonine 576. The Fibrinogen C-terminal domain occupies cysteine 577–alanine 796. N-linked (GlcNAc...) asparagine glycosylation is found at asparagine 598, asparagine 654, asparagine 665, asparagine 764, asparagine 805, asparagine 844, asparagine 861, asparagine 949, and asparagine 957. Residues phenylalanine 814–cysteine 958 enclose the Laminin G-like 3 domain. Cystine bridges form between cysteine 931–cysteine 958, cysteine 962–cysteine 975, cysteine 969–cysteine 984, and cysteine 986–cysteine 996. Residues cysteine 962–cysteine 996 enclose the EGF-like 2 domain. N-linked (GlcNAc...) asparagine glycans are attached at residues asparagine 1079 and asparagine 1148. The 163-residue stretch at phenylalanine 1089–cysteine 1251 folds into the Laminin G-like 4 domain. Cysteine 1210 and cysteine 1251 are oxidised to a cystine. A helical membrane pass occupies residues isoleucine 1285–phenylalanine 1305. Residues tyrosine 1306 to glutamate 1381 are Cytoplasmic-facing. The tract at residues histidine 1317–glutamate 1381 is disordered. Residues asparagine 1319–proline 1329 are compositionally biased toward basic and acidic residues. Positions proline 1329–proline 1366 match the SH3-binding motif. The span at proline 1334–glycine 1363 shows a compositional bias: pro residues. The residue at position 1380 (serine 1380) is a Phosphoserine.

It belongs to the neurexin family. In terms of assembly, interacts with CNTN1/contactin in cis form. As to expression, predominantly expressed in brain. In myelinated nerve fibers of the CNS predominantly found in paranodal axoglial junctions. In unmyelinated nerve fibers of the CNS diffusely distributed along the entire surface. Weak expression is detected in ovary, pancreas, colon, lung, heart, intestine and testis.

It is found in the membrane. Its subcellular location is the cell junction. The protein resides in the paranodal septate junction. Functionally, required, with CNTNAP2, for radial and longitudinal organization of myelinated axons. Plays a role in the formation of functional distinct domains critical for saltatory conduction of nerve impulses in myelinated nerve fibers. Demarcates the paranodal region of the axo-glial junction. In association with contactin involved in the signaling between axons and myelinating glial cells. This is Contactin-associated protein 1 (Cntnap1) from Rattus norvegicus (Rat).